Consider the following 346-residue polypeptide: Short-wave-sensitive opsin 1 (346 aa).

Over 1 to 31 (MSGEDEFYLFQNISSVGPWDGPQYHIAPVWA) the chain is Extracellular. N12 carries an N-linked (GlcNAc...) asparagine glycan. Residues 32–56 (FHLQAAFMGFVFFAGTPLNATVLVA) form a helical membrane-spanning segment. Topologically, residues 57–68 (TLHYKKLRQPLN) are cytoplasmic. Residues 69–94 (YILVNVSLGGFLFCIFSVFTVFIASC) traverse the membrane as a helical segment. At 95-108 (HGYFLFGRHVCALE) the chain is on the extracellular side. C105 and C182 are disulfide-bonded. A helical membrane pass occupies residues 109 to 128 (AFLGSVAGLVTGWSLAFLAF). At 129-147 (ERYLVICKPFGNIRFNSKH) the chain is on the cytoplasmic side. A helical transmembrane segment spans residues 148-171 (ALTVVLITWTIGIGVSIPPFFGWS). Residues 172 to 197 (RFIPEGLQCSCGPDWYTVGTKYRSEH) lie on the Extracellular side of the membrane. A helical transmembrane segment spans residues 198-225 (YTWFLFIFCFIIPLSLICFSYFQLLRTL). The Cytoplasmic portion of the chain corresponds to 226-247 (RAVAAQQQESATTQKAEREVSH). A helical transmembrane segment spans residues 248 to 271 (MVVVMVGSFCLCYVPYAALAMYMV). Over 272-279 (NNRNHGLY) the chain is Extracellular. The helical transmembrane segment at 280–304 (LRLVTIPAFFSKSSCVYNPIIYCFM) threads the bilayer. K291 bears the N6-(retinylidene)lysine mark. Residues 305 to 346 (NKQFRACILEMVCRKPMTDESDMSGSQKTEVSTVSSSKVGPH) are Cytoplasmic-facing. The segment at 322 to 346 (TDESDMSGSQKTEVSTVSSSKVGPH) is disordered. Low complexity predominate over residues 330-346 (SQKTEVSTVSSSKVGPH).

It belongs to the G-protein coupled receptor 1 family. Opsin subfamily. Phosphorylated on some or all of the serine and threonine residues present in the C-terminal region. In terms of tissue distribution, expressed in cone photoreceptor cells.

The protein resides in the cell membrane. It is found in the photoreceptor inner segment. The protein localises to the cell projection. Its subcellular location is the cilium. It localises to the photoreceptor outer segment. The protein resides in the cytoplasm. It is found in the perinuclear region. In terms of biological role, visual pigments are the light-absorbing molecules that mediate vision. They consist of an apoprotein, opsin, covalently linked to cis-retinal. Required for the maintenance of cone outer segment organization in the ventral retina, but not essential for the maintenance of functioning cone photoreceptors. Involved in ensuring correct abundance and localization of retinal membrane proteins. May increase spectral sensitivity in dim light. The polypeptide is Short-wave-sensitive opsin 1 (Opn1sw) (Rattus norvegicus (Rat)).